We begin with the raw amino-acid sequence, 66 residues long: Large ribosomal subunit protein bL35 (66 aa).

Belongs to the bacterial ribosomal protein bL35 family.

The chain is Large ribosomal subunit protein bL35 from Leptospira biflexa serovar Patoc (strain Patoc 1 / Ames).